Consider the following 328-residue polypeptide: Interleukin-12 subunit beta (328 aa).

The signal sequence occupies residues 1 to 22 (MCHQQLVISWFSLVFLASPLMA). Residues 29 to 106 (DVYVVELDWY…LSHSLLLLHK (78 aa)) form the Ig-like C2-type domain. A disulfide bridge connects residues Cys50 and Cys90. Asn125, Asn135, Asn222, and Asn303 each carry an N-linked (GlcNAc...) asparagine glycan. The region spanning 237–328 (PPKNLQLKPL…WSEWASVPCS (92 aa)) is the Fibronectin type-III domain.

Belongs to the IL-12B family. As to quaternary structure, heterodimer with IL12A; disulfide-linked. The heterodimer is known as interleukin IL-12. Heterodimer with IL23A; disulfide-linked. The heterodimer is known as interleukin IL-23. Also secreted as a monomer. Interacts with NBR1; this interaction promotes IL-12 secretion.

The protein localises to the secreted. In terms of biological role, cytokine that can act as a growth factor for activated T and NK cells, enhance the lytic activity of NK/lymphokine-activated killer cells, and stimulate the production of IFN-gamma by resting PBMC. Its function is as follows. Associates with IL23A to form the IL-23 interleukin, a heterodimeric cytokine which functions in innate and adaptive immunity. IL-23 may constitute with IL-17 an acute response to infection in peripheral tissues. IL-23 binds to a heterodimeric receptor complex composed of IL12RB1 and IL23R, activates the Jak-Stat signaling cascade, stimulates memory rather than naive T-cells and promotes production of pro-inflammatory cytokines. IL-23 induces autoimmune inflammation and thus may be responsible for autoimmune inflammatory diseases and may be important for tumorigenesis. In Papio anubis (Olive baboon), this protein is Interleukin-12 subunit beta (IL12B).